A 152-amino-acid polypeptide reads, in one-letter code: Xanthine-guanine phosphoribosyltransferase (152 aa).

5-phospho-alpha-D-ribose 1-diphosphate is bound by residues 37 to 38, R69, and 88 to 96; these read RG and DDLVDTGGT. Residue R69 participates in GMP binding. A Mg(2+)-binding site is contributed by D89. Guanine-binding residues include D92 and I135. D92 and I135 together coordinate xanthine. GMP is bound by residues 92 to 96 and 134 to 135; these read DTGGT and WI.

Belongs to the purine/pyrimidine phosphoribosyltransferase family. XGPT subfamily. In terms of assembly, homotetramer. It depends on Mg(2+) as a cofactor.

Its subcellular location is the cell inner membrane. The catalysed reaction is GMP + diphosphate = guanine + 5-phospho-alpha-D-ribose 1-diphosphate. It catalyses the reaction XMP + diphosphate = xanthine + 5-phospho-alpha-D-ribose 1-diphosphate. The enzyme catalyses IMP + diphosphate = hypoxanthine + 5-phospho-alpha-D-ribose 1-diphosphate. It functions in the pathway purine metabolism; GMP biosynthesis via salvage pathway; GMP from guanine: step 1/1. Its pathway is purine metabolism; XMP biosynthesis via salvage pathway; XMP from xanthine: step 1/1. Its function is as follows. Purine salvage pathway enzyme that catalyzes the transfer of the ribosyl-5-phosphate group from 5-phospho-alpha-D-ribose 1-diphosphate (PRPP) to the N9 position of the 6-oxopurines guanine and xanthine to form the corresponding ribonucleotides GMP (guanosine 5'-monophosphate) and XMP (xanthosine 5'-monophosphate), with the release of PPi. To a lesser extent, also acts on hypoxanthine. The sequence is that of Xanthine-guanine phosphoribosyltransferase from Klebsiella pneumoniae (strain 342).